The sequence spans 350 residues: GTPase Obg (350 aa).

The region spanning 1–159 (MRFIDQTEIF…FRLHLELKLL (159 aa)) is the Obg domain. The region spanning 160 to 328 (AEVGIIGLPN…LLQQVWEELD (169 aa)) is the OBG-type G domain. GTP is bound by residues 166–173 (GLPNAGKS), 191–195 (FTTLI), 213–216 (DIPG), 280–283 (NKID), and 309–311 (SAV). Ser-173 and Thr-193 together coordinate Mg(2+).

Belongs to the TRAFAC class OBG-HflX-like GTPase superfamily. OBG GTPase family. As to quaternary structure, monomer. It depends on Mg(2+) as a cofactor.

The protein localises to the cytoplasm. An essential GTPase which binds GTP, GDP and possibly (p)ppGpp with moderate affinity, with high nucleotide exchange rates and a fairly low GTP hydrolysis rate. Plays a role in control of the cell cycle, stress response, ribosome biogenesis and in those bacteria that undergo differentiation, in morphogenesis control. This chain is GTPase Obg, found in Acaryochloris marina (strain MBIC 11017).